The chain runs to 489 residues: Phenylalanine--tRNA ligase alpha subunit (489 aa).

Residues T316, 355–357 (QLD), F395, and F420 each bind L-phenylalanine.

This sequence belongs to the class-II aminoacyl-tRNA synthetase family. Phe-tRNA synthetase alpha subunit type 2 subfamily. As to quaternary structure, tetramer of two alpha and two beta subunits. It depends on Mg(2+) as a cofactor.

It is found in the cytoplasm. It carries out the reaction tRNA(Phe) + L-phenylalanine + ATP = L-phenylalanyl-tRNA(Phe) + AMP + diphosphate + H(+). This Pyrobaculum aerophilum (strain ATCC 51768 / DSM 7523 / JCM 9630 / CIP 104966 / NBRC 100827 / IM2) protein is Phenylalanine--tRNA ligase alpha subunit.